The chain runs to 273 residues: Large ribosomal subunit protein uL2c (273 aa).

The protein belongs to the universal ribosomal protein uL2 family. Part of the 50S ribosomal subunit.

The protein localises to the plastid. The protein resides in the apicoplast. The sequence is that of Large ribosomal subunit protein uL2c (rpl2) from Eimeria tenella (Coccidian parasite).